A 283-amino-acid polypeptide reads, in one-letter code: tRNA-cytidine(32) 2-sulfurtransferase (283 aa).

The short motif at 37–42 (SGGKDS) is the PP-loop motif element. Residues C112, C115, and C203 each coordinate [4Fe-4S] cluster.

This sequence belongs to the TtcA family. In terms of assembly, homodimer. Mg(2+) serves as cofactor. The cofactor is [4Fe-4S] cluster.

The protein localises to the cytoplasm. It carries out the reaction cytidine(32) in tRNA + S-sulfanyl-L-cysteinyl-[cysteine desulfurase] + AH2 + ATP = 2-thiocytidine(32) in tRNA + L-cysteinyl-[cysteine desulfurase] + A + AMP + diphosphate + H(+). It functions in the pathway tRNA modification. Catalyzes the ATP-dependent 2-thiolation of cytidine in position 32 of tRNA, to form 2-thiocytidine (s(2)C32). The sulfur atoms are provided by the cysteine/cysteine desulfurase (IscS) system. The polypeptide is tRNA-cytidine(32) 2-sulfurtransferase (Legionella pneumophila (strain Paris)).